A 281-amino-acid chain; its full sequence is Type VI secretion system accessory component TagJ (281 aa).

In terms of assembly, interacts with TssB1 (via N-terminus). Interacts with ClpV1.

Its function is as follows. Component of the H1 type VI (H1-T6SS) secretion system that plays a role in the release of toxins targeting both eukaryotic and prokaryotic species. Forms a stable complex with TssB1. This complex, although not crucial for the H1-T6SS function, may fine-tune the assembly of the system. Plays a role in the interaction between ClpV1 and the TssC1/TssB1 sheath. This Pseudomonas aeruginosa (strain ATCC 15692 / DSM 22644 / CIP 104116 / JCM 14847 / LMG 12228 / 1C / PRS 101 / PAO1) protein is Type VI secretion system accessory component TagJ.